Consider the following 60-residue polypeptide: Cytotoxin 5 (60 aa).

Cystine bridges form between Cys3–Cys21, Cys14–Cys38, Cys42–Cys53, and Cys54–Cys59.

This sequence belongs to the three-finger toxin family. Short-chain subfamily. Type IA cytotoxin sub-subfamily. In terms of assembly, monomer in solution; Homodimer and oligomer in the presence of negatively charged lipids forming a pore with a size ranging between 20 and 30 Angstroms. As to expression, expressed by the venom gland.

Its subcellular location is the secreted. It is found in the target cell membrane. Functionally, basic protein that binds to cell membrane and depolarizes cardiomyocytes. It also possesses lytic activity on many other cells, including red blood cells. Interaction with sulfatides in the cell membrane induces pore formation and cell internalization and is responsible for cytotoxicity in cardiomyocytes. It targets the mitochondrial membrane and induces mitochondrial swelling and fragmentation. Inhibits protein kinases C. It binds to the integrin alpha-V/beta-3 with a moderate affinity. Is cardiotoxic and cytocidal to Yoshida sarcoma cells. This Naja atra (Chinese cobra) protein is Cytotoxin 5.